We begin with the raw amino-acid sequence, 164 residues long: Nucleotide-binding protein Daro_3028 (164 aa).

Belongs to the YajQ family.

Functionally, nucleotide-binding protein. The chain is Nucleotide-binding protein Daro_3028 from Dechloromonas aromatica (strain RCB).